The sequence spans 324 residues: Serpentine receptor class gamma-10 (324 aa).

The next 8 membrane-spanning stretches (helical) occupy residues 39-59 (SSYL…VFHG), 69-89 (MLYC…VIFG), 91-111 (IFIY…TPSI), 128-146 (TFSQ…IFLM), 155-175 (ILKP…WKIL), 206-226 (LFHF…TILG), 246-266 (MIMA…VFFA), and 279-299 (IVSF…IVMS).

The protein belongs to the nematode receptor-like protein srg family.

It localises to the membrane. This chain is Serpentine receptor class gamma-10 (srg-10), found in Caenorhabditis elegans.